The chain runs to 378 residues: Chorismate synthase (378 aa).

Residues 37–60 (EEEIQKDLTRRRPGQNDLTTPRDE) are disordered. An NADP(+)-binding site is contributed by Arg47. FMN is bound by residues 124–126 (RSS), Gly289, 304–308 (KPTST), and Arg330.

The protein belongs to the chorismate synthase family. Homotetramer. It depends on FMNH2 as a cofactor.

The enzyme catalyses 5-O-(1-carboxyvinyl)-3-phosphoshikimate = chorismate + phosphate. It participates in metabolic intermediate biosynthesis; chorismate biosynthesis; chorismate from D-erythrose 4-phosphate and phosphoenolpyruvate: step 7/7. Catalyzes the anti-1,4-elimination of the C-3 phosphate and the C-6 proR hydrogen from 5-enolpyruvylshikimate-3-phosphate (EPSP) to yield chorismate, which is the branch point compound that serves as the starting substrate for the three terminal pathways of aromatic amino acid biosynthesis. This reaction introduces a second double bond into the aromatic ring system. The protein is Chorismate synthase of Leptospira biflexa serovar Patoc (strain Patoc 1 / Ames).